Consider the following 88-residue polypeptide: UPF0223 protein OB1419 (88 aa).

It belongs to the UPF0223 family.

The polypeptide is UPF0223 protein OB1419 (Oceanobacillus iheyensis (strain DSM 14371 / CIP 107618 / JCM 11309 / KCTC 3954 / HTE831)).